Consider the following 338-residue polypeptide: Envelope glycoprotein K (338 aa).

An N-terminal signal peptide occupies residues 1–30 (MLAVRSLQHLSTVVLITAYGLVLVWYTVFG). The Extracellular segment spans residues 31-121 (ASPLHRCIYA…VNCLETLWYT (91 aa)). The segment at 31–121 (ASPLHRCIYA…VNCLETLWYT (91 aa)) is involved in fusion. Residues asparagine 48 and asparagine 58 are each glycosylated (N-linked (GlcNAc...) asparagine; by host). Residues 122–140 (RVRLVVVGWFLYLAFVALH) traverse the membrane as a helical segment. Topologically, residues 141–212 (QRRCMFGVVS…DPVTFLYHRP (72 aa)) are cytoplasmic. A helical membrane pass occupies residues 213 to 233 (AIGVIVGCELMLRFVAVGLIV). Residues 234–243 (GTAFISRGAC) lie on the Extracellular side of the membrane. The helical transmembrane segment at 244-264 (AITYPLFLTITTWCFVSTIGL) threads the bilayer. The Cytoplasmic portion of the chain corresponds to 265–301 (TELYCILRRGPAPKNADKAAAPGRSKGLSGVCGRCCS). An interaction with UL20 region spans residues 265–301 (TELYCILRRGPAPKNADKAAAPGRSKGLSGVCGRCCS). Residues 302–322 (IILSGIAVRLCYIAVVAGVVL) traverse the membrane as a helical segment. The Extracellular segment spans residues 323-338 (VALHYEQEIQRRLFDV).

The protein belongs to the alphaherpesvirinae glycoprotein K family. Interacts (via UL20 interaction region) with protein UL20 (via N-terminus); this interaction probably plays a role in the coordinate transport of protein UL20 and gK to the trans-Golgi network (TGN), and is required for the cell surface expression of gK. Post-translationally, N-glycosylated.

Its subcellular location is the host cell membrane. The protein resides in the host endosome membrane. It localises to the host Golgi apparatus membrane. Functionally, glycoprotein that probably modulates membrane fusion events during secondary envelopment of cytoplasmic capsids that bud into specific trans-Golgi network (TGN)-derived membranes. Also plays a role, together with gB, in virus-induced cell-to-cell fusion (syncytia formation). Seems to block fusion of virions with infected-cell membranes. The polypeptide is Envelope glycoprotein K (gK) (Homo sapiens (Human)).